Reading from the N-terminus, the 205-residue chain is Large ribosomal subunit protein uL4 (205 aa).

The disordered stretch occupies residues 56–78; the sequence is VSGTTAKPYRQKHTGRARQGSLR.

Belongs to the universal ribosomal protein uL4 family. Part of the 50S ribosomal subunit.

One of the primary rRNA binding proteins, this protein initially binds near the 5'-end of the 23S rRNA. It is important during the early stages of 50S assembly. It makes multiple contacts with different domains of the 23S rRNA in the assembled 50S subunit and ribosome. Its function is as follows. Forms part of the polypeptide exit tunnel. The sequence is that of Large ribosomal subunit protein uL4 from Ehrlichia ruminantium (strain Gardel).